Here is a 131-residue protein sequence, read N- to C-terminus: MSMSDPIADMLTRIRNAQGVQKASVVMPSSKLKAAIAKVLKDEGYVEDFSVQEEGGKAQLTIGLKYYAGRPVIERIERVSKPGLRVYKGRSDIPHVMNGLGVAIISTPQGLMTDRKARATGVGGEVLCYVA.

The protein belongs to the universal ribosomal protein uS8 family. As to quaternary structure, part of the 30S ribosomal subunit. Contacts proteins S5 and S12.

One of the primary rRNA binding proteins, it binds directly to 16S rRNA central domain where it helps coordinate assembly of the platform of the 30S subunit. The polypeptide is Small ribosomal subunit protein uS8 (Cupriavidus metallidurans (strain ATCC 43123 / DSM 2839 / NBRC 102507 / CH34) (Ralstonia metallidurans)).